A 353-amino-acid polypeptide reads, in one-letter code: MSEPLKPRIDFDGPLQAEKIPPLKGARAFDTLEADNFAPARLVTGEEEEGAAEAVVESVLRPKRSLWRRMVSAGLAIFGVSVVAQGVQWTANAWQTQDWIALGGCVAGALIVGAGVGSLATEWRRLWRLRQRAHERDEARDMLHSHAVGKAKAFCEKLAQQAGLDQSHPALQRWYAAIHETQSDREVVSLYAQLVQPVLDAQARREISRSAAESTLMIAVSPLALVDMAFIAWRNLRLINRIATLYGIELGYYSRLRLFRLVLLNIAFAGASELVREVGMDWMSQDLAARLSARAAQGIGAGLLTARLGIKAMELCRPLPWIADDKPRLGDFRRELIGQLKETLQKSKTRPEK.

The next 3 membrane-spanning stretches (helical) occupy residues 70–90 (MVSAGLAIFGVSVVAQGVQWT), 99–119 (WIALGGCVAGALIVGAGVGSL), and 213–233 (ESTLMIAVSPLALVDMAFIAW).

It belongs to the UPF0283 family.

It is found in the cell inner membrane. The polypeptide is UPF0283 membrane protein KPN78578_12740 (Klebsiella pneumoniae subsp. pneumoniae (strain ATCC 700721 / MGH 78578)).